The chain runs to 463 residues: Probable cysteine protease RD21B (463 aa).

A signal peptide spans 1 to 21 (MGFLKLSPMILLLAMIGVSYA). The propeptide at 22-137 (MDMSIISYDE…DRYQARVGDA (116 aa)) is activation peptide. Asn92 carries an N-linked (GlcNAc...) asparagine glycan. 5 disulfide bridges follow: Cys159–Cys201, Cys193–Cys234, Cys292–Cys343, Cys376–Cys388, and Cys382–Cys403. Cys162 is a catalytic residue. Catalysis depends on residues His298 and Asn318. Positions 354-463 (KKGQNPPNPG…FWAKSRKHIA (110 aa)) are cleaved as a propeptide — removed in mature form. N-linked (GlcNAc...) asparagine glycosylation occurs at Asn415.

The protein belongs to the peptidase C1 family. In terms of assembly, interacts with PRN2. Interacts with WSCP.

Functionally, probable thiol protease. This Arabidopsis thaliana (Mouse-ear cress) protein is Probable cysteine protease RD21B.